Reading from the N-terminus, the 88-residue chain is Small ribosomal subunit protein bS20 (88 aa).

A disordered region spans residues 1–21; sequence MANSAQAKKRARQNVKARKHN. Over residues 7–21 the composition is skewed to basic residues; sequence AKKRARQNVKARKHN.

The protein belongs to the bacterial ribosomal protein bS20 family.

Functionally, binds directly to 16S ribosomal RNA. In Acinetobacter baumannii (strain AB307-0294), this protein is Small ribosomal subunit protein bS20.